Consider the following 359-residue polypeptide: Guanine nucleotide-binding protein G(q) subunit alpha (359 aa).

Residues Cys9 and Cys10 are each lipidated (S-palmitoyl cysteine). A G-alpha domain is found at 38–359; it reads RELKLLLLGT…QLNLKEYNLV (322 aa). The tract at residues 41–54 is G1 motif; the sequence is KLLLLGTGESGKST. GTP contacts are provided by Ser50, Gly51, Lys52, Ser53, Thr54, Ser156, Leu180, Arg181, and Arg183. Ser53 lines the Mg(2+) pocket. A G2 motif region spans residues 178-186; sequence DVLRVRVPT. Thr186 is a Mg(2+) binding site. The interval 201–210 is G3 motif; it reads FRMVDVGGQR. Gln209 carries the post-translational modification 5-glutamyl histamine. The segment at 270–277 is G4 motif; that stretch reads ILFLNKKD. The GTP site is built by Asn274, Lys275, Asp277, and Ala331. Residues 329 to 334 form a G5 motif region; sequence TCATDT.

This sequence belongs to the G-alpha family. G(q) subfamily. G proteins are composed of 3 units; alpha, beta and gamma. The alpha chain contains the guanine nucleotide binding site. Interacts (GDP-bound form) with RIC8A (via C-terminus); promoting GNAQ folding and association with the plasma membrane. Binds NHERF1. Forms a complex with PECAM1 and BDKRB2. Interacts with GAS2L2. Post-translationally, palmitoylated by ZDHHC3 and ZDHHC7. Palmitoylation occurs in the Golgi and participates in the localization of GNAQ to the plasma membrane. In terms of processing, histaminylated at Gln-209 residues by TGM2.

The protein localises to the cell membrane. It is found in the golgi apparatus. Its subcellular location is the nucleus. It localises to the nucleus membrane. It carries out the reaction GTP + H2O = GDP + phosphate + H(+). Functionally, guanine nucleotide-binding proteins (G proteins) function as transducers downstream of G protein-coupled receptors (GPCRs) in numerous signaling cascades. The alpha chain contains the guanine nucleotide binding site and alternates between an active, GTP-bound state and an inactive, GDP-bound state. Signaling by an activated GPCR promotes GDP release and GTP binding. The alpha subunit has a low GTPase activity that converts bound GTP to GDP, thereby terminating the signal. Both GDP release and GTP hydrolysis are modulated by numerous regulatory proteins. Signaling is mediated via phospholipase C-beta-dependent inositol lipid hydrolysis for signal propagation: activates phospholipase C-beta: following GPCR activation, GNAQ activates PLC-beta (PLCB1, PLCB2, PLCB3 or PLCB4), leading to production of diacylglycerol (DAG) and inositol 1,4,5-trisphosphate (IP3). Required for platelet activation. Regulates B-cell selection and survival and is required to prevent B-cell-dependent autoimmunity. Regulates chemotaxis of BM-derived neutrophils and dendritic cells (in vitro). Transduces FFAR4 signaling in response to long-chain fatty acids (LCFAs). Together with GNA11, required for heart development. The sequence is that of Guanine nucleotide-binding protein G(q) subunit alpha (Gnaq) from Rattus norvegicus (Rat).